The sequence spans 434 residues: Serine/threonine transporter SstT (434 aa).

Helical transmembrane passes span I14–I34, F41–I61, F72–A92, A135–L155, T172–L192, L210–V230, I282–M302, I316–I336, and F351–V371. The interval G413–V434 is disordered.

This sequence belongs to the dicarboxylate/amino acid:cation symporter (DAACS) (TC 2.A.23) family.

It is found in the cell membrane. The catalysed reaction is L-serine(in) + Na(+)(in) = L-serine(out) + Na(+)(out). It carries out the reaction L-threonine(in) + Na(+)(in) = L-threonine(out) + Na(+)(out). Functionally, involved in the import of serine and threonine into the cell, with the concomitant import of sodium (symport system). This is Serine/threonine transporter SstT from Lacticaseibacillus casei (strain BL23) (Lactobacillus casei).